We begin with the raw amino-acid sequence, 30 residues long: Phospholipase A2 acanmyotoxin-2 (30 aa).

The Ca(2+) site is built by Tyr28 and Gly30.

Ca(2+) serves as cofactor. In terms of processing, contains seven disulfide bonds. As to expression, expressed by the venom gland.

The protein localises to the secreted. The enzyme catalyses a 1,2-diacyl-sn-glycero-3-phosphocholine + H2O = a 1-acyl-sn-glycero-3-phosphocholine + a fatty acid + H(+). Functionally, snake venom phospholipase A2 (PLA2) that has myotoxic activity but no significant neurotoxicity. PLA2 catalyzes the calcium-dependent hydrolysis of the 2-acyl groups in 3-sn-phosphoglycerides. This Acanthophis sp. (strain Seram) (Seram death adder) protein is Phospholipase A2 acanmyotoxin-2.